We begin with the raw amino-acid sequence, 64 residues long: Large ribosomal subunit protein uL30 (64 aa).

The protein belongs to the universal ribosomal protein uL30 family. As to quaternary structure, part of the 50S ribosomal subunit.

In Syntrophus aciditrophicus (strain SB), this protein is Large ribosomal subunit protein uL30.